Consider the following 206-residue polypeptide: MKMKSIYFIAGLLLMIVQGSWQNPLQDTEEKSRSFKASQSEPLDESRQLNEVKRHSQGTFTSDYSKYLDSRRAQDFVQWLMSTKRNGQQGQEDKENDKFPDQLSSNAISKRHSEFERHAEGTYTSDITSYLEGQAAKEFIAWLVNGRGRRDFPEKALMAEEMGRRHADGTFTSDINKILDDMAAKEFLKWLINTKVTQRDLLGEYQ.

The N-terminal stretch at methionine 1–glutamine 22 is a signal peptide. A disordered region spans residues aspartate 27–glutamine 57. Residues aspartate 44 to arginine 54 are compositionally biased toward basic and acidic residues. Residues asparagine 86–serine 109 constitute a propeptide that is removed on maturation. An Arginine amide modification is found at arginine 147. 2 consecutive propeptides follow at residues aspartate 151 to glycine 163 and arginine 199 to glutamine 206.

This sequence belongs to the glucagon family. In terms of processing, proglucagon is post-translationally processed in a tissue-specific manner in pancreatic A cells and intestinal L cells. In pancreatic A cells, the major bioactive hormone is glucagon cleaved by PCSK2/PC2. In the intestinal L cells PCSK1/PC1 liberates GLP-1 and GLP-2. GLP-1 is further N-terminally truncated by post-translational processing in the intestinal L cells resulting in GLP-1(7-37) GLP-1-(7-36)amide.

Its subcellular location is the secreted. Plays a key role in glucose metabolism and homeostasis. Regulates blood glucose by increasing gluconeogenesis and decreasing glycolysis. Functionally, potent stimulator of glucose-dependent insulin release. Plays important roles on gastric motility and the suppression of plasma glucagon levels. May be involved in the suppression of satiety and stimulation of glucose disposal in peripheral tissues, independent of the actions of insulin. Has growth-promoting activities on intestinal epithelium. May also regulate the hypothalamic pituitary axis (HPA) via effects on LH, TSH, CRH, oxytocin, and vasopressin secretion. Increases islet mass through stimulation of islet neogenesis and pancreatic beta cell proliferation. In terms of biological role, stimulates intestinal growth and up-regulates villus height in the small intestine, concomitant with increased crypt cell proliferation and decreased enterocyte apoptosis. The gastrointestinal tract, from the stomach to the colon is the principal target for GLP-2 action. Plays a key role in nutrient homeostasis, enhancing nutrient assimilation through enhanced gastrointestinal function, as well as increasing nutrient disposal. Stimulates intestinal glucose transport and decreases mucosal permeability. The sequence is that of Pro-glucagon (GCG) from Gallus gallus (Chicken).